The primary structure comprises 82 residues: Cortexin-1 (82 aa).

Positions 1 to 20 are disordered; sequence MSSAWTLSPEPLPPSTGPPV. The chain crosses the membrane as a helical span at residues 30-50; the sequence is TVFAFVLCLLVVLVLLMVRCV.

This sequence belongs to the cortexin family.

It is found in the membrane. May mediate extracellular or intracellular signaling of cortical neurons during forebrain development. The chain is Cortexin-1 (Ctxn1) from Mus musculus (Mouse).